The primary structure comprises 177 residues: Large ribosomal subunit protein uL6 (177 aa).

An N6-acetyllysine modification is found at lysine 44.

This sequence belongs to the universal ribosomal protein uL6 family. Part of the 50S ribosomal subunit.

This protein binds to the 23S rRNA, and is important in its secondary structure. It is located near the subunit interface in the base of the L7/L12 stalk, and near the tRNA binding site of the peptidyltransferase center. This chain is Large ribosomal subunit protein uL6, found in Shigella sonnei (strain Ss046).